The chain runs to 271 residues: ATP synthase subunit delta (271 aa).

It belongs to the ATPase delta chain family. F-type ATPases have 2 components, F(1) - the catalytic core - and F(0) - the membrane proton channel. F(1) has five subunits: alpha(3), beta(3), gamma(1), delta(1), epsilon(1). F(0) has three main subunits: a(1), b(2) and c(10-14). The alpha and beta chains form an alternating ring which encloses part of the gamma chain. F(1) is attached to F(0) by a central stalk formed by the gamma and epsilon chains, while a peripheral stalk is formed by the delta and b chains.

Its subcellular location is the cell membrane. F(1)F(0) ATP synthase produces ATP from ADP in the presence of a proton or sodium gradient. F-type ATPases consist of two structural domains, F(1) containing the extramembraneous catalytic core and F(0) containing the membrane proton channel, linked together by a central stalk and a peripheral stalk. During catalysis, ATP synthesis in the catalytic domain of F(1) is coupled via a rotary mechanism of the central stalk subunits to proton translocation. In terms of biological role, this protein is part of the stalk that links CF(0) to CF(1). It either transmits conformational changes from CF(0) to CF(1) or is implicated in proton conduction. The polypeptide is ATP synthase subunit delta (Renibacterium salmoninarum (strain ATCC 33209 / DSM 20767 / JCM 11484 / NBRC 15589 / NCIMB 2235)).